The chain runs to 1392 residues: DNA-directed RNA polymerase subunit beta (1392 aa).

The protein belongs to the RNA polymerase beta chain family. As to quaternary structure, the RNAP catalytic core consists of 2 alpha, 1 beta, 1 beta' and 1 omega subunit. When a sigma factor is associated with the core the holoenzyme is formed, which can initiate transcription.

The catalysed reaction is RNA(n) + a ribonucleoside 5'-triphosphate = RNA(n+1) + diphosphate. In terms of biological role, DNA-dependent RNA polymerase catalyzes the transcription of DNA into RNA using the four ribonucleoside triphosphates as substrates. The chain is DNA-directed RNA polymerase subunit beta from Neisseria meningitidis serogroup A / serotype 4A (strain DSM 15465 / Z2491).